The sequence spans 221 residues: Ribosomal RNA small subunit methyltransferase G (221 aa).

Residues G85, F90, 136-137, and R149 each bind S-adenosyl-L-methionine; that span reads AE.

This sequence belongs to the methyltransferase superfamily. RNA methyltransferase RsmG family.

It is found in the cytoplasm. Specifically methylates the N7 position of a guanine in 16S rRNA. This chain is Ribosomal RNA small subunit methyltransferase G, found in Porphyromonas gingivalis (strain ATCC BAA-308 / W83).